The primary structure comprises 349 residues: DNA polymerase IV (349 aa).

Positions 4-185 (IIHIDCDCFY…LPVAKLHGVG (182 aa)) constitute a UmuC domain. Residues D8 and D103 each coordinate Mg(2+). Residue E104 is part of the active site.

The protein belongs to the DNA polymerase type-Y family. Monomer. Requires Mg(2+) as cofactor.

The protein resides in the cytoplasm. It catalyses the reaction DNA(n) + a 2'-deoxyribonucleoside 5'-triphosphate = DNA(n+1) + diphosphate. Its function is as follows. Poorly processive, error-prone DNA polymerase involved in untargeted mutagenesis. Copies undamaged DNA at stalled replication forks, which arise in vivo from mismatched or misaligned primer ends. These misaligned primers can be extended by PolIV. Exhibits no 3'-5' exonuclease (proofreading) activity. May be involved in translesional synthesis, in conjunction with the beta clamp from PolIII. The chain is DNA polymerase IV from Pseudomonas aeruginosa (strain UCBPP-PA14).